The sequence spans 233 residues: Small ribosomal subunit protein uS2 (233 aa).

Belongs to the universal ribosomal protein uS2 family.

This Bacillus cereus (strain G9842) protein is Small ribosomal subunit protein uS2.